A 283-amino-acid polypeptide reads, in one-letter code: Bifunctional protein FolD (283 aa).

Residues 166–168, S191, and I232 each bind NADP(+); that span reads GQS.

This sequence belongs to the tetrahydrofolate dehydrogenase/cyclohydrolase family. In terms of assembly, homodimer.

It catalyses the reaction (6R)-5,10-methylene-5,6,7,8-tetrahydrofolate + NADP(+) = (6R)-5,10-methenyltetrahydrofolate + NADPH. The enzyme catalyses (6R)-5,10-methenyltetrahydrofolate + H2O = (6R)-10-formyltetrahydrofolate + H(+). Its pathway is one-carbon metabolism; tetrahydrofolate interconversion. Catalyzes the oxidation of 5,10-methylenetetrahydrofolate to 5,10-methenyltetrahydrofolate and then the hydrolysis of 5,10-methenyltetrahydrofolate to 10-formyltetrahydrofolate. The protein is Bifunctional protein FolD of Laribacter hongkongensis (strain HLHK9).